A 438-amino-acid polypeptide reads, in one-letter code: Putative phospholipase A2 (438 aa).

Ser-257 functions as the Nucleophile in the catalytic mechanism. Residues Asp-291 and His-368 each act as charge relay system in the active site.

This sequence belongs to the serine esterase family.

Its subcellular location is the cytoplasm. It localises to the nucleus. The enzyme catalyses a 1-O-alkyl-2-acetyl-sn-glycero-3-phosphocholine + H2O = a 1-O-alkyl-sn-glycero-3-phosphocholine + acetate + H(+). The polypeptide is Putative phospholipase A2 (Schizosaccharomyces pombe (strain 972 / ATCC 24843) (Fission yeast)).